A 249-amino-acid chain; its full sequence is Probable aquaporin TIP-type (249 aa).

A run of 2 helical transmembrane segments spans residues 22–42 (AGLA…GSGI) and 56–76 (AGLI…VSVG). The short motif at 85-87 (NPA) is the NPA 1 element. 3 helical membrane passes run 103 to 123 (IVYI…LVFV), 137 to 157 (VGVG…VYTV), and 169 to 189 (IGII…LVGG). An NPA 2 motif is present at residues 197 to 199 (NPA). The helical transmembrane segment at 217 to 237 (YWAGPLIGGGIAGLVYEVLFI) threads the bilayer.

Belongs to the MIP/aquaporin (TC 1.A.8) family. TIP (TC 1.A.8.10) subfamily. In terms of tissue distribution, expression is highest in root tips, with slightly lower levels of hybridizing mRNA in stems, and whole roots, and much lower levels in nodules and leaves.

Its subcellular location is the membrane. Aquaporins facilitate the transport of water and small neutral solutes across cell membranes. This Medicago sativa (Alfalfa) protein is Probable aquaporin TIP-type (MCP1).